A 143-amino-acid polypeptide reads, in one-letter code: uncharacterized protein (143 aa).

A disordered region spans residues 1–143 (MRSSRQKASI…WFSQTVKRKA (143 aa)). Composition is skewed to basic and acidic residues over residues 34–46 (ISAEKEEEEKHLD) and 61–76 (EYQKETKEKETDRKIV). Acidic residues-rich tracts occupy residues 77–93 (DDEEETKFETTLEPEEE) and 103–115 (YEEEDEDEEPDLA).

This is an uncharacterized protein from Bacillus subtilis (strain 168).